Here is a 251-residue protein sequence, read N- to C-terminus: Leucine-rich repeat and calponin homology domain-containing protein 1 (251 aa).

A disordered region spans residues 73-97; that stretch reads SNGSEYSPNEIRANSPAISPTANST. A phosphoserine mark is found at serine 87 and serine 91. The segment covering 88-97 has biased composition (polar residues); the sequence is PAISPTANST. Threonine 123 is modified (phosphothreonine). The 114-residue stretch at 131-244 folds into the Calponin-homology (CH) domain; it reads MREEKELVEH…ITVQALLDVT (114 aa).

In terms of assembly, interacts (via LRR repeats) with unphosphorylated DOCK8 (via DHR-2 domain); the interaction prevents the interaction between DOCK8 and CDC42.

Its subcellular location is the cytoplasm. Its function is as follows. Acts as a negative regulator of GTPase CDC42 by sequestering CDC42-guanine exchange factor DOCK8. Probably by preventing CDC42 activation, negatively regulates CD4(+) T-cell migration. In Felis catus (Cat), this protein is Leucine-rich repeat and calponin homology domain-containing protein 1.